The chain runs to 205 residues: Holliday junction branch migration complex subunit RuvA (205 aa).

Residues 1-64 (MIGKLKGSIE…EDQLKLFGFV (64 aa)) form a domain I region. Residues 65-143 (SALEREWFNL…AFAGDASASI (79 aa)) form a domain II region. Positions 144–153 (GLKQELGEGV) are flexible linker. Residues 153–205 (VASAPVADAVSALTNLGYSRDQAANAVAAALKNGGEGGDSAKLIRLGLKELSR) form a domain III region.

The protein belongs to the RuvA family. In terms of assembly, homotetramer. Forms an RuvA(8)-RuvB(12)-Holliday junction (HJ) complex. HJ DNA is sandwiched between 2 RuvA tetramers; dsDNA enters through RuvA and exits via RuvB. An RuvB hexamer assembles on each DNA strand where it exits the tetramer. Each RuvB hexamer is contacted by two RuvA subunits (via domain III) on 2 adjacent RuvB subunits; this complex drives branch migration. In the full resolvosome a probable DNA-RuvA(4)-RuvB(12)-RuvC(2) complex forms which resolves the HJ.

It localises to the cytoplasm. Its function is as follows. The RuvA-RuvB-RuvC complex processes Holliday junction (HJ) DNA during genetic recombination and DNA repair, while the RuvA-RuvB complex plays an important role in the rescue of blocked DNA replication forks via replication fork reversal (RFR). RuvA specifically binds to HJ cruciform DNA, conferring on it an open structure. The RuvB hexamer acts as an ATP-dependent pump, pulling dsDNA into and through the RuvAB complex. HJ branch migration allows RuvC to scan DNA until it finds its consensus sequence, where it cleaves and resolves the cruciform DNA. In Agrobacterium fabrum (strain C58 / ATCC 33970) (Agrobacterium tumefaciens (strain C58)), this protein is Holliday junction branch migration complex subunit RuvA.